Here is a 303-residue protein sequence, read N- to C-terminus: N-acetylmuramic acid 6-phosphate etherase (303 aa).

The SIS domain maps to 61–224 (IVQAFQQGGR…TTASMILLGK (164 aa)). E89 acts as the Proton donor in catalysis. E120 is a catalytic residue.

It belongs to the GCKR-like family. MurNAc-6-P etherase subfamily. Homodimer.

It catalyses the reaction N-acetyl-D-muramate 6-phosphate + H2O = N-acetyl-D-glucosamine 6-phosphate + (R)-lactate. Its pathway is amino-sugar metabolism; 1,6-anhydro-N-acetylmuramate degradation. It functions in the pathway amino-sugar metabolism; N-acetylmuramate degradation. The protein operates within cell wall biogenesis; peptidoglycan recycling. Functionally, specifically catalyzes the cleavage of the D-lactyl ether substituent of MurNAc 6-phosphate, producing GlcNAc 6-phosphate and D-lactate. Together with AnmK, is also required for the utilization of anhydro-N-acetylmuramic acid (anhMurNAc) either imported from the medium or derived from its own cell wall murein, and thus plays a role in cell wall recycling. The polypeptide is N-acetylmuramic acid 6-phosphate etherase (murQ) (Haemophilus influenzae (strain ATCC 51907 / DSM 11121 / KW20 / Rd)).